The sequence spans 738 residues: Glycogen [starch] synthase, muscle (738 aa).

Serine 8 carries the post-translational modification Phosphoserine; by AMPK and PKA. At serine 11 the chain carries Phosphoserine. Position 39 (lysine 39) interacts with UDP. UDP-alpha-D-glucose is bound by residues histidine 205 and arginine 211. The alpha-D-glucose 6-phosphate site is built by histidine 291, glutamate 292, glutamine 294, histidine 297, and lysine 301. A UDP-binding site is contributed by arginine 331. Arginine 331 is a binding site for UDP-alpha-D-glucose. Serine 412 carries the post-translational modification Phosphoserine. An alpha-D-glucose 6-phosphate-binding site is contributed by histidine 501. UDP-alpha-D-glucose contacts are provided by glutamate 510, tryptophan 512, and glycine 513. UDP is bound at residue threonine 515. The alpha-D-glucose 6-phosphate site is built by arginine 582 and arginine 586. The disordered stretch occupies residues 632–738; sequence QGYRYPRPAS…PTSSLGEERN (107 aa). Phosphoserine is present on residues serine 641 and serine 645. Serine 649 is subject to Phosphoserine; by GSK3-alpha and GSK3-beta. Residues serine 652, serine 653, serine 657, and serine 672 each carry the phosphoserine modification. Positions 682–695 are enriched in basic and acidic residues; the sequence is AKDRRNIRAPEWPR. 3 positions are modified to phosphoserine: serine 698, serine 709, and serine 711. Positions 698–738 are enriched in low complexity; sequence SCSSSTGGSKRSNSVDTGPSSSLSTPTEPLSPTSSLGEERN. Threonine 722 bears the Phosphothreonine mark. 2 positions are modified to phosphoserine: serine 728 and serine 732.

Belongs to the glycosyltransferase 3 family. As to quaternary structure, part of the GYS1-GYG1 complex, a heterooctamer composed of a tetramer of GYS1 and 2 dimers of GYG1, where each GYS1 protomer binds to one GYG1 subunit (via GYG1 C-terminus); the GYS1 tetramer may dissociate from GYG1 dimers to continue glycogen polymerization on its own. Phosphorylation at Ser-8 by AMPK inactivates the enzyme activity. Primed phosphorylation at Ser-657 (site 5) by CSNK2A1 and CSNK2A2 is required for inhibitory phosphorylation at Ser-641 (site 3a), Ser-645 (site 3b), Ser-649 (site 3c) and Ser-653 (site 4) by GSK3A an GSK3B. Phosphorylated at Ser-641 by PASK, leading to inactivation; phosphorylation by PASK is inhibited by glycogen. Phosphorylated at Ser-641 by DYRK2, leading to inactivation. Dephosphorylation at Ser-641 and Ser-645 by PP1 activates the enzyme.

The enzyme catalyses [(1-&gt;4)-alpha-D-glucosyl](n) + UDP-alpha-D-glucose = [(1-&gt;4)-alpha-D-glucosyl](n+1) + UDP + H(+). The protein operates within glycan biosynthesis; glycogen biosynthesis. Allosteric activation by glucose-6-phosphate. Phosphorylation reduces the activity towards UDP-glucose. When in the non-phosphorylated state, glycogen synthase does not require glucose-6-phosphate as an allosteric activator; when phosphorylated it does. Its function is as follows. Glycogen synthase participates in the glycogen biosynthetic process along with glycogenin and glycogen branching enzyme. Extends the primer composed of a few glucose units formed by glycogenin by adding new glucose units to it. In this context, glycogen synthase transfers the glycosyl residue from UDP-Glc to the non-reducing end of alpha-1,4-glucan. This is Glycogen [starch] synthase, muscle (Gys1) from Rattus norvegicus (Rat).